We begin with the raw amino-acid sequence, 398 residues long: MKKIITDLDLNNKKVLMRVDFNVPMKDGKITDENRIVQALPTIKYVLEHNAKLILFSHLGKVKIEEDKATKSLKAVAEKLSELLGKNVTFIPETRGEKLESAINNLKSGEVLMFENTRFEDLDGKKESKNDSELGKYWASLGDVFVNDAFGTAHRAHASNVGIAENIGNGNSAVGFLVEKELKFIGEAVNNPKRPLIAILGGAKVSDKIGVIENLLTKADKILIGGAMMFTFLKAEGKNIGTSLVEDDKLDLAKDLLAKSNGKIVLPVDTVIASEFKNDIEFSTVDVDNIPNNKMGLDIGEKTVTLFDSYIKTAKTVVWNGPMGVFEMSNFAKGTIGVCESIANLTDAVTIIGGGDSAAAAISLGYADKFTHISTGGGASLEFLEGKVLPGVEAISNK.

Substrate is bound by residues 20 to 22 (DFN), Arg-35, 58 to 61 (HLGK), Arg-118, and Arg-155. Residues Lys-208, Gly-296, Glu-327, and 354 to 357 (GGDS) each bind ATP.

Belongs to the phosphoglycerate kinase family. Monomer.

It localises to the cytoplasm. The enzyme catalyses (2R)-3-phosphoglycerate + ATP = (2R)-3-phospho-glyceroyl phosphate + ADP. The protein operates within carbohydrate degradation; glycolysis; pyruvate from D-glyceraldehyde 3-phosphate: step 2/5. In Fusobacterium nucleatum subsp. nucleatum (strain ATCC 25586 / DSM 15643 / BCRC 10681 / CIP 101130 / JCM 8532 / KCTC 2640 / LMG 13131 / VPI 4355), this protein is Phosphoglycerate kinase.